Consider the following 360-residue polypeptide: AA9 family lytic polysaccharide monooxygenase A (360 aa).

The N-terminal stretch at 1 to 19 (MKTSFGLLALAAAAKLVNA) is a signal peptide. The Cu(2+) site is built by His20 and His102. A disulfide bridge links Cys62 with Cys183. His169 serves as a coordination point for O2. Tyr180 provides a ligand contact to Cu(2+). Residues 254 to 293 (TSAASASSTKAPATTAAPVQTESAKPATSTTQAAAPTTLV) form a disordered region. One can recognise a CBM1 domain in the interval 322–358 (GVVKMYAQCGGMNYSGSTTCESGLTCKQWNPYYHQCV). A glycan (N-linked (GlcNAc...) asparagine) is linked at Asn334.

Belongs to the polysaccharide monooxygenase AA9 family. Cu(2+) serves as cofactor.

The protein resides in the secreted. The enzyme catalyses [(1-&gt;4)-beta-D-glucosyl]n+m + reduced acceptor + O2 = 4-dehydro-beta-D-glucosyl-[(1-&gt;4)-beta-D-glucosyl]n-1 + [(1-&gt;4)-beta-D-glucosyl]m + acceptor + H2O.. Its function is as follows. Lytic polysaccharide monooxygenase (LPMO) that depolymerizes crystalline and amorphous polysaccharides via the oxidation of scissile alpha- or beta-(1-4)-glycosidic bonds, yielding C4 oxidation products. Catalysis by LPMOs requires the reduction of the active-site copper from Cu(II) to Cu(I) by a reducing agent and H(2)O(2) or O(2) as a cosubstrate. The chain is AA9 family lytic polysaccharide monooxygenase A (eglD) from Aspergillus terreus (strain NIH 2624 / FGSC A1156).